We begin with the raw amino-acid sequence, 262 residues long: Hydroxyethylthiazole kinase (262 aa).

Substrate is bound at residue Met-43. Residues Arg-118 and Thr-164 each contribute to the ATP site. Ala-191 provides a ligand contact to substrate.

This sequence belongs to the Thz kinase family. Mg(2+) serves as cofactor.

It catalyses the reaction 5-(2-hydroxyethyl)-4-methylthiazole + ATP = 4-methyl-5-(2-phosphooxyethyl)-thiazole + ADP + H(+). It participates in cofactor biosynthesis; thiamine diphosphate biosynthesis; 4-methyl-5-(2-phosphoethyl)-thiazole from 5-(2-hydroxyethyl)-4-methylthiazole: step 1/1. In terms of biological role, catalyzes the phosphorylation of the hydroxyl group of 4-methyl-5-beta-hydroxyethylthiazole (THZ). The chain is Hydroxyethylthiazole kinase from Cereibacter sphaeroides (strain ATCC 17025 / ATH 2.4.3) (Rhodobacter sphaeroides).